Consider the following 539-residue polypeptide: ATP synthase subunit beta (539 aa).

The segment at 1–44 is disordered; it reads MAKTPAEKPATAAKKPAAPKAAAAPKAAAAKAPAAAKAPAAKKP. Position 212–219 (212–219) interacts with ATP; the sequence is GGAGVGKT.

The protein belongs to the ATPase alpha/beta chains family. F-type ATPases have 2 components, CF(1) - the catalytic core - and CF(0) - the membrane proton channel. CF(1) has five subunits: alpha(3), beta(3), gamma(1), delta(1), epsilon(1). CF(0) has three main subunits: a(1), b(2) and c(9-12). The alpha and beta chains form an alternating ring which encloses part of the gamma chain. CF(1) is attached to CF(0) by a central stalk formed by the gamma and epsilon chains, while a peripheral stalk is formed by the delta and b chains.

It localises to the cell inner membrane. It carries out the reaction ATP + H2O + 4 H(+)(in) = ADP + phosphate + 5 H(+)(out). Functionally, produces ATP from ADP in the presence of a proton gradient across the membrane. The catalytic sites are hosted primarily by the beta subunits. This is ATP synthase subunit beta from Caulobacter vibrioides (strain ATCC 19089 / CIP 103742 / CB 15) (Caulobacter crescentus).